Reading from the N-terminus, the 433-residue chain is Protein translocase subunit SecY (433 aa).

The next 10 helical transmembrane spans lie at 17–37 (IIFTIFVLIICRFGSFIPIAG), 71–91 (IFALAIMPYITASIIIQLMSV), 117–137 (LTVLLASLQAYGVAVSLESIV), 141–161 (GPVVIIPGLFFKITTVITLVV), 184–204 (LIIFIGIISGVPSAIISMFEL), 212–232 (PLVAIAVCAGVVILISIIIFF), 268–288 (GVIPPIFASSILLFPATLANF), 309–329 (IYILLYVALIMFFSFFYTAIV), 366–386 (LTVVGGIYLSVICIIPELLMN), and 388–408 (YVISLSLGGTSFLIVVNVVLD).

Belongs to the SecY/SEC61-alpha family. Component of the Sec protein translocase complex. Heterotrimer consisting of SecY, SecE and SecG subunits. The heterotrimers can form oligomers, although 1 heterotrimer is thought to be able to translocate proteins. Interacts with the ribosome. Interacts with SecDF, and other proteins may be involved. Interacts with SecA.

Its subcellular location is the cell inner membrane. Functionally, the central subunit of the protein translocation channel SecYEG. Consists of two halves formed by TMs 1-5 and 6-10. These two domains form a lateral gate at the front which open onto the bilayer between TMs 2 and 7, and are clamped together by SecE at the back. The channel is closed by both a pore ring composed of hydrophobic SecY resides and a short helix (helix 2A) on the extracellular side of the membrane which forms a plug. The plug probably moves laterally to allow the channel to open. The ring and the pore may move independently. The chain is Protein translocase subunit SecY from Rickettsia bellii (strain RML369-C).